A 500-amino-acid polypeptide reads, in one-letter code: MNKFPWLTIIVVLPIFAGSFIFFLPHKGNRVIRWYTICICTLELLLTTYAFCYHFRLDDPLIQLVEDYKWINFFDFRWKLGIDGLSIGPVLLTGFITTLATLAAWPVTRDSRLFHFLMLAMYSGQIGSFSSRDLLLFFIMWELELIPVYLLLSMWGGKKRLYSATKFILYTAGGSIFLLMGVLGVGLYGSNEPTLNFETSVNQSYPVALEIIFYIGFFIAFAVKLPILPLHTWLPDTHGEAHYSTCMLLAGILLKMGAYGLIRINMELLPHAHSIFSPWLMIVGTIQIIYAASTSLGQRNLKKRIAYSSVSHMGFILIGIASITDTGLNGAILQIISHGFIGAALFFLAGTSYDRIRLVYLDEMGGVAIPMPKIFTMFSSFSISSLALPGMSGFVAEVIVFLGIITSQKYLLMPKIVITFVMAIGMILTPIYLLSMSRQMFYGYKLFNIPNSFVFDSGPRELFVSISIFLPVIGIGMYPDFVLSLSVDKVEGILSNYFYR.

14 consecutive transmembrane segments (helical) span residues 4-24 (FPWL…IFFL), 35-55 (YTIC…CYHF), 87-107 (IGPV…AWPV), 113-130 (LFHF…GSFS), 134-154 (LLLF…LLSM), 167-187 (FILY…GVGL), 207-227 (VALE…KLPI), 242-262 (HYST…YGLI), 272-292 (AHSI…IYAA), 305-325 (IAYS…SITD), 330-350 (GAIL…FLAG), 386-406 (LALP…GIIT), 416-436 (IVIT…LLSM), and 462-482 (LFVS…PDFV).

Belongs to the complex I subunit 4 family.

It is found in the plastid. The protein localises to the chloroplast thylakoid membrane. It catalyses the reaction a plastoquinone + NADH + (n+1) H(+)(in) = a plastoquinol + NAD(+) + n H(+)(out). It carries out the reaction a plastoquinone + NADPH + (n+1) H(+)(in) = a plastoquinol + NADP(+) + n H(+)(out). This Guizotia abyssinica (Niger) protein is NAD(P)H-quinone oxidoreductase chain 4, chloroplastic.